A 234-amino-acid polypeptide reads, in one-letter code: Large ribosomal subunit protein uL1 (234 aa).

This sequence belongs to the universal ribosomal protein uL1 family. Part of the 50S ribosomal subunit.

Binds directly to 23S rRNA. The L1 stalk is quite mobile in the ribosome, and is involved in E site tRNA release. Functionally, protein L1 is also a translational repressor protein, it controls the translation of the L11 operon by binding to its mRNA. This Serratia proteamaculans (strain 568) protein is Large ribosomal subunit protein uL1.